A 449-amino-acid polypeptide reads, in one-letter code: Tubulin beta chain (449 aa).

GTP contacts are provided by glutamine 11, glutamate 71, serine 140, glycine 144, threonine 145, glycine 146, asparagine 206, and asparagine 228. A Mg(2+)-binding site is contributed by glutamate 71.

It belongs to the tubulin family. In terms of assembly, dimer of alpha and beta chains. A typical microtubule is a hollow water-filled tube with an outer diameter of 25 nm and an inner diameter of 15 nM. Alpha-beta heterodimers associate head-to-tail to form protofilaments running lengthwise along the microtubule wall with the beta-tubulin subunit facing the microtubule plus end conferring a structural polarity. Microtubules usually have 13 protofilaments but different protofilament numbers can be found in some organisms and specialized cells. The cofactor is Mg(2+).

Its subcellular location is the cytoplasm. The protein resides in the cytoskeleton. Tubulin is the major constituent of microtubules, a cylinder consisting of laterally associated linear protofilaments composed of alpha- and beta-tubulin heterodimers. Microtubules grow by the addition of GTP-tubulin dimers to the microtubule end, where a stabilizing cap forms. Below the cap, tubulin dimers are in GDP-bound state, owing to GTPase activity of alpha-tubulin. The chain is Tubulin beta chain (TUBB) from Cicer arietinum (Chickpea).